Reading from the N-terminus, the 1152-residue chain is ATP-dependent helicase/deoxyribonuclease subunit B (1152 aa).

Residues 1 to 338 enclose the UvrD-like helicase ATP-binding domain; that stretch reads MSIRFIYGRA…LVRDRNYRFR (338 aa). 8 to 15 contributes to the ATP binding site; that stretch reads GRAGSGKS. Residues 276 to 579 form the UvrD-like helicase C-terminal domain; it reads PYRFKNSEEL…NVGDIARIKG (304 aa). Residues Cys785, Cys1106, Cys1109, and Cys1115 each contribute to the [4Fe-4S] cluster site.

The protein belongs to the helicase family. AddB/RexB type 1 subfamily. Heterodimer of AddA and AddB. Mg(2+) serves as cofactor. It depends on [4Fe-4S] cluster as a cofactor.

Its function is as follows. The heterodimer acts as both an ATP-dependent DNA helicase and an ATP-dependent, dual-direction single-stranded exonuclease. Recognizes the chi site generating a DNA molecule suitable for the initiation of homologous recombination. The AddB subunit has 5' -&gt; 3' nuclease activity but not helicase activity. The polypeptide is ATP-dependent helicase/deoxyribonuclease subunit B (Clostridium botulinum (strain Alaska E43 / Type E3)).